The chain runs to 388 residues: Chorismate synthase (388 aa).

R39 and R45 together coordinate NADP(+). FMN contacts are provided by residues 130–132, 251–252, G296, 311–315, and R337; these read RSS, NA, and KPIPT.

Belongs to the chorismate synthase family. As to quaternary structure, homotetramer. FMNH2 is required as a cofactor.

The catalysed reaction is 5-O-(1-carboxyvinyl)-3-phosphoshikimate = chorismate + phosphate. Its pathway is metabolic intermediate biosynthesis; chorismate biosynthesis; chorismate from D-erythrose 4-phosphate and phosphoenolpyruvate: step 7/7. Catalyzes the anti-1,4-elimination of the C-3 phosphate and the C-6 proR hydrogen from 5-enolpyruvylshikimate-3-phosphate (EPSP) to yield chorismate, which is the branch point compound that serves as the starting substrate for the three terminal pathways of aromatic amino acid biosynthesis. This reaction introduces a second double bond into the aromatic ring system. This chain is Chorismate synthase, found in Streptococcus pyogenes serotype M3 (strain SSI-1).